The sequence spans 159 residues: Nucleotide-binding protein PSPA7_4966 (159 aa).

The protein belongs to the YajQ family.

In terms of biological role, nucleotide-binding protein. This Pseudomonas paraeruginosa (strain DSM 24068 / PA7) (Pseudomonas aeruginosa (strain PA7)) protein is Nucleotide-binding protein PSPA7_4966.